A 445-amino-acid chain; its full sequence is Tubulin beta-4B chain (445 aa).

An MREI motif motif is present at residues 1–4 (MREI). Glutamine 11 provides a ligand contact to GTP. Threonine 55 carries the post-translational modification Phosphothreonine. N6-acetyllysine is present on lysine 58. Residues glutamate 69, serine 138, glycine 142, threonine 143, and glycine 144 each coordinate GTP. Glutamate 69 contributes to the Mg(2+) binding site. Phosphoserine; by CDK1 is present on serine 172. Residues asparagine 204 and asparagine 226 each coordinate GTP. The interval 426-445 (QDATAEEEGEFEEEAEEEVA) is disordered. The span at 429-445 (TAEEEGEFEEEAEEEVA) shows a compositional bias: acidic residues. At glutamate 438 the chain carries 5-glutamyl polyglutamate.

The protein belongs to the tubulin family. In terms of assembly, dimer of alpha and beta chains. A typical microtubule is a hollow water-filled tube with an outer diameter of 25 nm and an inner diameter of 15 nM. Alpha-beta heterodimers associate head-to-tail to form protofilaments running lengthwise along the microtubule wall with the beta-tubulin subunit facing the microtubule plus end conferring a structural polarity. Microtubules usually have 13 protofilaments but different protofilament numbers can be found in some organisms and specialized cells. Component of sperm flagellar doublet microtubules. Mg(2+) serves as cofactor. Some glutamate residues at the C-terminus are polyglycylated, resulting in polyglycine chains on the gamma-carboxyl group. Glycylation is mainly limited to tubulin incorporated into axonemes (cilia and flagella) whereas glutamylation is prevalent in neuronal cells, centrioles, axonemes, and the mitotic spindle. Both modifications can coexist on the same protein on adjacent residues, and lowering polyglycylation levels increases polyglutamylation, and reciprocally. Cilia and flagella glycylation is required for their stability and maintenance. Flagella glycylation controls sperm motility. Post-translationally, some glutamate residues at the C-terminus are polyglutamylated, resulting in polyglutamate chains on the gamma-carboxyl group. Polyglutamylation plays a key role in microtubule severing by spastin (SPAST). SPAST preferentially recognizes and acts on microtubules decorated with short polyglutamate tails: severing activity by SPAST increases as the number of glutamates per tubulin rises from one to eight, but decreases beyond this glutamylation threshold. Glutamylation is also involved in cilia motility. In terms of processing, phosphorylated on Ser-172 by CDK1 during the cell cycle, from metaphase to telophase, but not in interphase. This phosphorylation inhibits tubulin incorporation into microtubules.

The protein resides in the cytoplasm. The protein localises to the cytoskeleton. It is found in the flagellum axoneme. Tubulin is the major constituent of microtubules, a cylinder consisting of laterally associated linear protofilaments composed of alpha- and beta-tubulin heterodimers. Microtubules grow by the addition of GTP-tubulin dimers to the microtubule end, where a stabilizing cap forms. Below the cap, tubulin dimers are in GDP-bound state, owing to GTPase activity of alpha-tubulin. This is Tubulin beta-4B chain (Tubb4b) from Rattus norvegicus (Rat).